Consider the following 80-residue polypeptide: Cell division protein ZapB (80 aa).

Residues 3-80 (FEVFEKLEAK…ALLGKMNEVN (78 aa)) are a coiled coil.

This sequence belongs to the ZapB family. As to quaternary structure, homodimer. The ends of the coiled-coil dimer bind to each other, forming polymers. Interacts with FtsZ.

It localises to the cytoplasm. Its function is as follows. Non-essential, abundant cell division factor that is required for proper Z-ring formation. It is recruited early to the divisome by direct interaction with FtsZ, stimulating Z-ring assembly and thereby promoting cell division earlier in the cell cycle. Its recruitment to the Z-ring requires functional FtsA or ZipA. This is Cell division protein ZapB from Edwardsiella ictaluri (strain 93-146).